Here is a 215-residue protein sequence, read N- to C-terminus: MSLFYAKPEKAKMPTEKTALKGRNVPIETAAEHFVSGMPLAPPYPSNMQQCVFGLGCFWGAERKFWQLPGVYVTAVGYSAGFTPNPTYEEVCSGSTGHNEVVLVVYNPSQVSFKKLLAVFWESHNPTQGMRQGNDLGTQYRSGVYVYSDEQAEQAEHSKQVVQAMLTEKGYGEITTEIIKAKEFYFAEAYHQQYLAKNPNGYCGLGGTGIVVPCD.

Residue cysteine 57 is part of the active site.

It belongs to the MsrA Met sulfoxide reductase family.

The catalysed reaction is L-methionyl-[protein] + [thioredoxin]-disulfide + H2O = L-methionyl-(S)-S-oxide-[protein] + [thioredoxin]-dithiol. The enzyme catalyses [thioredoxin]-disulfide + L-methionine + H2O = L-methionine (S)-S-oxide + [thioredoxin]-dithiol. Has an important function as a repair enzyme for proteins that have been inactivated by oxidation. Catalyzes the reversible oxidation-reduction of methionine sulfoxide in proteins to methionine. This chain is Peptide methionine sulfoxide reductase MsrA, found in Saccharophagus degradans (strain 2-40 / ATCC 43961 / DSM 17024).